The following is a 1082-amino-acid chain: Error-prone DNA polymerase (1082 aa).

The protein belongs to the DNA polymerase type-C family. DnaE2 subfamily.

It localises to the cytoplasm. The catalysed reaction is DNA(n) + a 2'-deoxyribonucleoside 5'-triphosphate = DNA(n+1) + diphosphate. DNA polymerase involved in damage-induced mutagenesis and translesion synthesis (TLS). It is not the major replicative DNA polymerase. In Xanthomonas campestris pv. campestris (strain B100), this protein is Error-prone DNA polymerase.